Here is a 646-residue protein sequence, read N- to C-terminus: Depudecin biosynthesis cluster-specific transcription activator DEP6 (646 aa).

Positions 16-43 form a DNA-binding region, zn(2)-C6 fungal-type; sequence CEICRERKVRCDRALPKCRRCDRLNQPC. Disordered stretches follow at residues 76–130 and 345–366; these read TTAA…SQSQ and KSEH…LALP. A compositionally biased stretch (polar residues) spans 349–360; it reads SQGMQNRETQSG.

The protein resides in the nucleus. Functionally, transcription factor that positively regulates the expression of the gene cluster that mediates the biosynthesis of depudecin, a highly oxidized eleven-carbon linear polyketide that acts as a histone deacetylase (HDAC) inhibitor and makes a small contribution to pathogenesis. This chain is Depudecin biosynthesis cluster-specific transcription activator DEP6, found in Alternaria brassicicola (Dark leaf spot agent).